The primary structure comprises 227 residues: Cytochrome c oxidase subunit 2 (227 aa).

Residues 1-14 (MAYPFQLGLQDATS) are Mitochondrial intermembrane-facing. Residues 15 to 45 (PIMEELMNFHDHTLMIVFLISSLVLYIISLM) traverse the membrane as a helical segment. At 46-59 (LTTKLTHTSTMDAQ) the chain is on the mitochondrial matrix side. The chain crosses the membrane as a helical span at residues 60–87 (EVETIWTILPAVILILIALPSLRILYMM). Over 88–227 (DEINNPVLTV…NFENWSASMI (140 aa)) the chain is Mitochondrial intermembrane. Cu cation-binding residues include histidine 161, cysteine 196, glutamate 198, cysteine 200, histidine 204, and methionine 207. Position 198 (glutamate 198) interacts with Mg(2+).

It belongs to the cytochrome c oxidase subunit 2 family. In terms of assembly, component of the cytochrome c oxidase (complex IV, CIV), a multisubunit enzyme composed of 14 subunits. The complex is composed of a catalytic core of 3 subunits MT-CO1, MT-CO2 and MT-CO3, encoded in the mitochondrial DNA, and 11 supernumerary subunits COX4I, COX5A, COX5B, COX6A, COX6B, COX6C, COX7A, COX7B, COX7C, COX8 and NDUFA4, which are encoded in the nuclear genome. The complex exists as a monomer or a dimer and forms supercomplexes (SCs) in the inner mitochondrial membrane with NADH-ubiquinone oxidoreductase (complex I, CI) and ubiquinol-cytochrome c oxidoreductase (cytochrome b-c1 complex, complex III, CIII), resulting in different assemblies (supercomplex SCI(1)III(2)IV(1) and megacomplex MCI(2)III(2)IV(2)). Found in a complex with TMEM177, COA6, COX18, COX20, SCO1 and SCO2. Interacts with TMEM177 in a COX20-dependent manner. Interacts with COX20. Interacts with COX16. Requires Cu cation as cofactor.

The protein resides in the mitochondrion inner membrane. The catalysed reaction is 4 Fe(II)-[cytochrome c] + O2 + 8 H(+)(in) = 4 Fe(III)-[cytochrome c] + 2 H2O + 4 H(+)(out). Component of the cytochrome c oxidase, the last enzyme in the mitochondrial electron transport chain which drives oxidative phosphorylation. The respiratory chain contains 3 multisubunit complexes succinate dehydrogenase (complex II, CII), ubiquinol-cytochrome c oxidoreductase (cytochrome b-c1 complex, complex III, CIII) and cytochrome c oxidase (complex IV, CIV), that cooperate to transfer electrons derived from NADH and succinate to molecular oxygen, creating an electrochemical gradient over the inner membrane that drives transmembrane transport and the ATP synthase. Cytochrome c oxidase is the component of the respiratory chain that catalyzes the reduction of oxygen to water. Electrons originating from reduced cytochrome c in the intermembrane space (IMS) are transferred via the dinuclear copper A center (CU(A)) of subunit 2 and heme A of subunit 1 to the active site in subunit 1, a binuclear center (BNC) formed by heme A3 and copper B (CU(B)). The BNC reduces molecular oxygen to 2 water molecules using 4 electrons from cytochrome c in the IMS and 4 protons from the mitochondrial matrix. The sequence is that of Cytochrome c oxidase subunit 2 (MT-CO2) from Maxomys bartelsii (Bartels's Javan maxomys).